A 402-amino-acid polypeptide reads, in one-letter code: Calcium-responsive transactivator (402 aa).

An N-terminal auto-inhibitory domain; necessary for interaction with SMARCA4/BRG1 region spans residues 1–148 (MSVAFASARP…TLPTTSMSMS (148 aa)). An SH2-binding motif is present at residues 50–53 (YQQI). 5 disordered regions span residues 72–129 (QSLL…GPNH), 141–170 (PTTS…SVPL), 195–250 (MHQQ…SSQQ), 262–290 (QYGH…YQPA), and 305–402 (TQHY…NYQQ). The span at 92-106 (QSGSAQGLHSQGSLS) shows a compositional bias: low complexity. The segment covering 117–129 (SLMQAQIGNGPNH) has biased composition (polar residues). The tract at residues 149–237 (GSGHGSGPGY…GGGVMGQRPM (89 aa)) is methionine-rich intra-molecular domain. Over residues 196–224 (HQQAASSHYSAAQGGSQHYQGQSMAMMGQ) the composition is skewed to low complexity. The segment at 251 to 323 (YLGQEEYYGG…SQYSQQQTGY (73 aa)) is MFD domain. Low complexity-rich tracts occupy residues 311-379 (GGNS…RASQ) and 390-402 (YGYE…NYQQ). The interval 340 to 402 (NQQSYPGQQQ…EQGQYGNYQQ (63 aa)) is necessary for nuclear localization. The short motif at 359–362 (SQYS) is the SH2-binding element. The SH3-binding signature appears at 377–385 (ASQTGPSTQ). Residues 393-402 (EQGQYGNYQQ) are necessary for interaction with CREBBP and for the recruitment of CREBBP to the nuclear bodies. The SH2-binding motif lies at 397–400 (YGNY).

This sequence belongs to the SS18 family. In terms of assembly, homodimer. Dimerization may be necessary for its function in neuronal dendritic development. Interacts (via C-terminus) with CREBBP (via N-terminus), EP300 and SMARCA4/BRG1. Interacts with the nBAF complex. Association with CREBBP facilitates transcription while the association with SMARCA4/BRG1 suppresses CREST-mediated transcription in resting neurons.

The protein localises to the nucleus. Its subcellular location is the chromosome. It localises to the centromere. It is found in the kinetochore. Its function is as follows. Transcriptional activator which is required for calcium-dependent dendritic growth and branching in cortical neurons. Recruits CREB-binding protein (CREBBP) to nuclear bodies. Component of the CREST-BRG1 complex, a multiprotein complex that regulates promoter activation by orchestrating a calcium-dependent release of a repressor complex and a recruitment of an activator complex. In resting neurons, transcription of the c-FOS promoter is inhibited by BRG1-dependent recruitment of a phospho-RB1-HDAC1 repressor complex. Upon calcium influx, RB1 is dephosphorylated by calcineurin, which leads to release of the repressor complex. At the same time, there is increased recruitment of CREBBP to the promoter by a CREST-dependent mechanism, which leads to transcriptional activation. The CREST-BRG1 complex also binds to the NR2B promoter, and activity-dependent induction of NR2B expression involves a release of HDAC1 and recruitment of CREBBP. The chain is Calcium-responsive transactivator (SS18L1) from Bos taurus (Bovine).